A 516-amino-acid polypeptide reads, in one-letter code: Anaerobic nitric oxide reductase transcription regulator NorR (516 aa).

Asp-57 carries the post-translational modification 4-aspartylphosphate. Positions 187–416 (IIGLSAPMLQ…LEHAIHRAVV (230 aa)) constitute a Sigma-54 factor interaction domain. ATP contacts are provided by residues 215-222 (GETGTGKE) and 278-287 (ADNGTLFLDE). A DNA-binding region (H-T-H motif) is located at residues 482–501 (WAATARALELDVANLHRLAK).

The protein operates within nitrogen metabolism; nitric oxide reduction. Functionally, required for the expression of anaerobic nitric oxide (NO) reductase, acts as a transcriptional activator for at least the norVW operon. Activation also requires sigma-54. The protein is Anaerobic nitric oxide reductase transcription regulator NorR of Klebsiella pneumoniae (strain 342).